A 268-amino-acid polypeptide reads, in one-letter code: Hydroxyacylglutathione hydrolase (268 aa).

Zn(2+) contacts are provided by His56, His58, Asp60, His61, His112, Asp137, and His176. Residue 176 to 178 coordinates substrate; sequence HEY.

The protein belongs to the metallo-beta-lactamase superfamily. Glyoxalase II family. As to quaternary structure, monomer. Requires Zn(2+) as cofactor.

It carries out the reaction an S-(2-hydroxyacyl)glutathione + H2O = a 2-hydroxy carboxylate + glutathione + H(+). Its pathway is secondary metabolite metabolism; methylglyoxal degradation; (R)-lactate from methylglyoxal: step 2/2. Functionally, thiolesterase that catalyzes the hydrolysis of S-D-lactoyl-glutathione to form glutathione and D-lactic acid. The polypeptide is Hydroxyacylglutathione hydrolase (hagh) (Dictyostelium discoideum (Social amoeba)).